The primary structure comprises 320 residues: G-protein coupled receptor homolog FPV021 (320 aa).

Residues 1-18 are Extracellular-facing; that stretch reads MDTDYGTVHTQQSVKGNT. The chain crosses the membrane as a helical span at residues 19–39; that stretch reads LILLIYFISFIVGFPGNCTVI. Over 40–52 the chain is Cytoplasmic; sequence WFTGYRWKKSVTT. The chain crosses the membrane as a helical span at residues 53–73; the sequence is IWFLNLAIADTLFVIFIPFEI. The Extracellular portion of the chain corresponds to 74–91; that stretch reads TYILMGHYWPFGLFVCRI. The cysteines at positions 89 and 167 are disulfide-linked. The helical transmembrane segment at 92-112 threads the bilayer; sequence GSLMFNTGMYASIFFLTFISI. Residues 113 to 133 lie on the Cytoplasmic side of the membrane; it reads DRYCLAFRRDICNKYRYRINI. A helical membrane pass occupies residues 134–154; it reads MVMIIISWIISILLSTPYMYF. Residues 155-188 lie on the Extracellular side of the membrane; sequence KNTNEKYRNNRDCLEDYHSDNNTYLLRRVVFCIS. A glycan (N-linked (GlcNAc...) asparagine; by host) is linked at Asn175. Residues 189-209 traverse the membrane as a helical segment; it reads LVMRYLVPSVVMLFCYCLLLF. At 210–222 the chain is on the cytoplasmic side; the sequence is KHSLFLSKGQTYT. A helical membrane pass occupies residues 223 to 243; that stretch reads IVIMITSFMVLWTPYNILYFI. Over 244–260 the chain is Extracellular; the sequence is DVIGSHYYNADTIIDAA. The helical transmembrane segment at 261–281 threads the bilayer; that stretch reads PISISLIFLSSSINPMIYMLV. Over 282-320 the chain is Cytoplasmic; the sequence is GRYVSFENYSMRESLKLILSEERDNQTNHENEIKMENIN.

The protein belongs to the G-protein coupled receptor 1 family.

It is found in the host cell membrane. In Vertebrata (FPV), this protein is G-protein coupled receptor homolog FPV021.